We begin with the raw amino-acid sequence, 472 residues long: Envelope glycoprotein O (472 aa).

An N-terminal signal peptide occupies residues 1–31; the sequence is MGKKEMIMVKGIPKIMLLISITFLLLSLINC. N-linked (GlcNAc...) asparagine; by host glycosylation is found at N109, N136, N163, N168, N177, N225, N248, N294, N298, N356, N391, N398, N405, N439, and N460.

The protein belongs to the herpesviridae U47 family. As to quaternary structure, forms the envelope trimer complex composed of gH, gL, and gO. The trimer interacts with host PDGFRA. N-glycosylated. In terms of processing, the N-terminus is blocked.

It is found in the virion membrane. Plays a role in viral entry into host cells. Forms a trimeric complex at the surface of the viral envelope together with gH and gL. This complex is required for entry in host fibroblasts. Mechanistically, engages host receptor(s) including PDGFRA to mediate infection. The sequence is that of Envelope glycoprotein O (UL74) from Human cytomegalovirus (strain Merlin) (HHV-5).